The sequence spans 484 residues: MNNKGSGLTPAQALDKLDALYEQSVVALRNAIGNYITSGELPDENARKQGLFVYPSLTVTWDGSTTNPPKTRAFGRFTHAGSYTTTITRPTLFRSYLNEQLTLLYQDYGAHISVQPSQHEIPYPYVIDGSELTLDRSMSAGLTRYFPTTELAQIGDETADGIYHPTEFSPLSHFDARRVDFSLARLRHYTGTPVEHFQPFVLFTNYTRYVDEFVRWGCSQILDPDSPYIALSCAGGNWITAETEAPEEAISDLAWKKHQMPAWHLITADGQGITLVNIGVGPSNAKTICDHLAVLRPDVWLMIGHCGGLRESQAIGDYVLAHAYLRDDHVLDAVLPPDIPIPSIAEVQRALYDATKLVSGRPGEEVKQRLRTGTVVTTDDRNWELRYSASALRFNLSRAVAIDMESATIAAQGYRFRVPYGTLLCVSDKPLHGEIKLPGQANRFYEGAISEHLQIGIRAIDLLRAEGDRLHSRKLRTFNEPPFR.

Belongs to the AMP nucleosidase family.

It catalyses the reaction AMP + H2O = adenine + D-ribose 5-phosphate. Functionally, catalyzes the hydrolysis of the N-glycosidic bond of AMP to form adenine and ribose 5-phosphate. Involved in regulation of AMP concentrations. The protein is AMP nucleosidase of Escherichia coli O157:H7.